A 538-amino-acid polypeptide reads, in one-letter code: Syncytin-2 (538 aa).

The N-terminal stretch at 1–15 (MGLLLLVLILTPSLA) is a signal peptide. At 16 to 478 (AYRHPDFPLL…GWLNWEGTWK (463 aa)) the chain is on the extracellular side. A CXXC motif is present at residues 43-46 (CWLC). Disulfide bonds link Cys43-Cys46, Cys43-Cys439, and Cys431-Cys438. N-linked (GlcNAc...) asparagine glycans are attached at residues Asn133, Asn146, Asn177, Asn220, Asn241, Asn247, Asn312, and Asn332. Positions 354-374 (FIPLLAGLGILAGTGTGIAGI) are fusion peptide. The CKS-17 motif lies at 414 to 430 (LQNRRGLDMLTAAQGGI). The CX6CC motif lies at 431-439 (CLALDEKCC). Asn443 carries N-linked (GlcNAc...) asparagine glycosylation. Residues 479–499 (WFSWVLPLTGPLVSLLLLLLF) traverse the membrane as a helical segment. At 500-538 (GPCLLNLITQFVSSRLQAIKLQTNLSAGRRPRNIQESPF) the chain is on the cytoplasmic side.

This sequence belongs to the gamma type-C retroviral envelope protein family. HERV class-I FRD env subfamily. The surface and transmembrane proteins form a heterodimer. They are attached by non-covalent interactions or by a labile interchain disulfide bond. Post-translationally, specific enzymatic cleavages in vivo yield the mature SU and TM proteins. In terms of processing, the CXXC motif is highly conserved across a broad range of retroviral envelope proteins. It is thought to participate in the formation of a labile disulfide bond possibly with the CX6CC motif present in the transmembrane protein.

It localises to the virion. The protein resides in the cell membrane. In terms of biological role, this endogenous retroviral envelope protein has retained its original fusogenic properties and participates in trophoblast fusion and the formation of a syncytium during placenta morphogenesis. The interaction with MFSD2A is apparently important for this process. Functionally, endogenous envelope proteins may have kept, lost or modified their original function during evolution but this one can still make pseudotypes with MLV, HIV-1 or SIV-1 virions and confer infectivity. Retroviral envelope proteins mediate receptor recognition and membrane fusion during early infection. The surface protein mediates receptor recognition, while the transmembrane protein anchors the envelope heterodimer to the viral membrane through one transmembrane domain. The other hydrophobic domain, called fusion peptide, mediates fusion of the viral membrane with the target cell membrane. The protein is Syncytin-2 (ERVFRD-1) of Gorilla gorilla gorilla (Western lowland gorilla).